The sequence spans 567 residues: MLAKNRLPGSGHTTPSPPASPRRSPRYRHGRSKAAAGSRFPTVQPSRTLAHRLSWILLSVLLRRQGIFLFAPLIYISCMLLYMGTVSFDVVPIIQRRPPPGSVYKSPQVYAKLRPEMDADNSTADAITTIWKHSYKGGEWKPYVNKSTGDLPESNGYIYVEANGGLNQQRTSICNAVAVAGYLNATLVIPNFHYHSIWRDPSKFGDIYDEEFFVSTLSNDVRVVDTIPEYLMERFDHNMTNVYNFRVKAWSPIQYYRDSILPKLLEEKIIRISPFANRLSFDAPQAVQRLRCLANYEALKFSKTILTLGETLVKRMKEQSANHGAKYVSVHLRFEEDMVAFSCCIFDGGNQEKQDMIAARERGWKGKFTKPGRVIRPGAIRQNGKCPLTPLEVGLMLRGMGFNKSTYIFLASGEIYDANRTMAPLLEMFPNLQTKEMLASEEELAPYKNFSSRMAAIDYTVCLHSEVFVTTQGGNFPHFLMGHRRYMFGGHSKTIRPDKRKLAILFDNPNIGWRSFKRQMLNMRSHSDSKGFELKRPNDSIYTFPCPDCMSRRNKTTTPESRPPPAT.

Residues 1–41 (MLAKNRLPGSGHTTPSPPASPRRSPRYRHGRSKAAAGSRFP) are disordered. The Cytoplasmic segment spans residues 1–65 (MLAKNRLPGS…ILLSVLLRRQ (65 aa)). Over residues 23–32 (RSPRYRHGRS) the composition is skewed to basic residues. The helical; Signal-anchor for type II membrane protein transmembrane segment at 66-86 (GIFLFAPLIYISCMLLYMGTV) threads the bilayer. Residues 87 to 567 (SFDVVPIIQR…TPESRPPPAT (481 aa)) lie on the Lumenal side of the membrane. 4 N-linked (GlcNAc...) asparagine glycosylation sites follow: N121, N145, N184, and N238. 331-333 (HLR) contacts substrate. Residues N403, N419, N449, N538, and N554 are each glycosylated (N-linked (GlcNAc...) asparagine).

Belongs to the glycosyltransferase GT106 family. In terms of tissue distribution, ubiquitous.

The protein localises to the golgi apparatus membrane. The protein operates within protein modification; protein glycosylation. Functionally, glycosyltransferase that plays a role in cell adhesion. This is Protein ESMERALDA 1 from Arabidopsis thaliana (Mouse-ear cress).